Here is a 175-residue protein sequence, read N- to C-terminus: NADH dehydrogenase [ubiquinone] iron-sulfur protein 4, mitochondrial (175 aa).

The transit peptide at 1–42 (MAAVSMSVALRQALWGRRVATVAAVSVSKVSTRSLSTSTWRL) directs the protein to the mitochondrion. The disordered stretch occupies residues 149-175 (ERKVPKPKSKSYGANFSWNKRTRVSTK). Serine 173 carries the phosphoserine modification.

The protein belongs to the complex I NDUFS4 subunit family. In terms of assembly, mammalian complex I is composed of 45 different subunits. This is a component of the iron-sulfur (IP) fragment of the enzyme. Interacts with BCAP31 and TOMM40; the interaction mediates its translocation to the mitochondria; the interaction with BCAP31 is direct. In terms of processing, phosphorylated.

The protein resides in the mitochondrion inner membrane. In terms of biological role, accessory subunit of the mitochondrial membrane respiratory chain NADH dehydrogenase (Complex I), that is believed not to be involved in catalysis. Complex I functions in the transfer of electrons from NADH to the respiratory chain. The immediate electron acceptor for the enzyme is believed to be ubiquinone. The sequence is that of NADH dehydrogenase [ubiquinone] iron-sulfur protein 4, mitochondrial (NDUFS4) from Bos taurus (Bovine).